Reading from the N-terminus, the 36-residue chain is Photosystem I reaction center subunit VIII (36 aa).

Residues 6 to 28 (LPSIFVPLIGLFFPAIAMASLFL) form a helical membrane-spanning segment.

This sequence belongs to the PsaI family.

Its subcellular location is the plastid. The protein localises to the chloroplast thylakoid membrane. Functionally, may help in the organization of the PsaL subunit. The protein is Photosystem I reaction center subunit VIII of Amborella trichopoda.